The sequence spans 128 residues: Large ribosomal subunit protein bL17 (128 aa).

The protein belongs to the bacterial ribosomal protein bL17 family. Part of the 50S ribosomal subunit. Contacts protein L32.

The chain is Large ribosomal subunit protein bL17 from Petrotoga mobilis (strain DSM 10674 / SJ95).